Reading from the N-terminus, the 415-residue chain is MQMSYAIRCAFYQLLLAALMLVAMLQLLYLSLLSGLHGQEEQDQYFEFFPPSPRSVDQVKAQLRTALASGGVLDASGDYRVYRGLLKTTMDPNDVILATHASVDNLLHLSGLLERWEGPLSVSVFAATKEEAQLATVLAYALSSHCPDMRARVAMHLVCPSRYEAAVPDPREPGEFALLRSCQEVFDKLARVAQPGINYALGTNVSYPNNLLRNLAREGANYALVIDVDMVPSEGLWRGLREMLDQSNQWGGTALVVPAFEIRRARRMPMNKNELVQLYQVGEVRPFYYGLCTPCQAPTNYSRWVNLPEESLLRPAYVVPWQDPWEPFYVAGGKVPTFDERFRQYGFNRISQACELHVAGFDFEVLNEGFLVHKGFKEALKFHPQKEAENQHNKILYRQFKQELKAKYPNSPRRC.

The Cytoplasmic segment spans residues 1-8 (MQMSYAIR). A helical; Signal-anchor for type II membrane protein membrane pass occupies residues 9–36 (CAFYQLLLAALMLVAMLQLLYLSLLSGL). Residues 37 to 415 (HGQEEQDQYF…AKYPNSPRRC (379 aa)) are Lumenal-facing. N-linked (GlcNAc...) asparagine glycosylation occurs at Asn204. Positions 227 and 229 each coordinate Mn(2+). Asn300 carries an N-linked (GlcNAc...) asparagine glycan.

This sequence belongs to the glycosyltransferase 49 family. Interacts with LARGE1 and LARGE2. Mn(2+) is required as a cofactor. In terms of tissue distribution, in the adult, highly expressed in heart, brain, skeletal muscle and kidney and to a lesser extent in placenta, pancreas, spleen, prostate, testis, ovary, small intestine and colon. Very weak expression in lung, liver, thymus and peripheral blood leukocytes. In fetal highly expressed in brain and kidney and to a lesser extent in lung and liver.

Its subcellular location is the golgi apparatus membrane. It carries out the reaction 3-O-[beta-D-Xyl-(1-&gt;4)-Rib-ol-P-Rib-ol-P-3-beta-D-GalNAc-(1-&gt;3)-beta-D-GlcNAc-(1-&gt;4)-(O-6-P-alpha-D-Man)]-Thr-[protein] + UDP-alpha-D-glucuronate = 3-O-[beta-D-GlcA-(1-&gt;3)-beta-D-Xyl-(1-&gt;4)-Rib-ol-P-Rib-ol-P-3-beta-D-GalNAc-(1-&gt;3)-beta-D-GlcNAc-(1-&gt;4)-(O-6-P-alpha-D-Man)]-Thr-[protein] + UDP + H(+). It functions in the pathway protein modification; protein glycosylation. In terms of biological role, beta-1,4-glucuronyltransferase involved in O-mannosylation of alpha-dystroglycan (DAG1). Transfers a glucuronic acid (GlcA) residue onto a xylose (Xyl) acceptor to produce the glucuronyl-beta-1,4-xylose-beta disaccharide primer, which is further elongated by LARGE1, during synthesis of phosphorylated O-mannosyl glycan. Phosphorylated O-mannosyl glycan is a carbohydrate structure present in alpha-dystroglycan (DAG1), which is required for binding laminin G-like domain-containing extracellular proteins with high affinity. Required for axon guidance; via its function in O-mannosylation of alpha-dystroglycan (DAG1). The chain is Beta-1,4-glucuronyltransferase 1 from Homo sapiens (Human).